We begin with the raw amino-acid sequence, 112 residues long: UPF0375 protein R05A10.4 (112 aa).

An N-terminal signal peptide occupies residues 1–19 (MNLSIFSAIIFSITIASSA). N59 is a glycosylation site (N-linked (GlcNAc...) asparagine).

It belongs to the UPF0375 family.

The protein resides in the secreted. The polypeptide is UPF0375 protein R05A10.4 (Caenorhabditis elegans).